The primary structure comprises 332 residues: Ribosomal RNA small subunit methyltransferase C (332 aa).

The protein belongs to the methyltransferase superfamily. RsmC family. Monomer.

It localises to the cytoplasm. The enzyme catalyses guanosine(1207) in 16S rRNA + S-adenosyl-L-methionine = N(2)-methylguanosine(1207) in 16S rRNA + S-adenosyl-L-homocysteine + H(+). Its function is as follows. Specifically methylates the guanine in position 1207 of 16S rRNA in the 30S particle. The polypeptide is Ribosomal RNA small subunit methyltransferase C (Pseudomonas paraeruginosa (strain DSM 24068 / PA7) (Pseudomonas aeruginosa (strain PA7))).